The sequence spans 170 residues: Aspartate 1-decarboxylase (170 aa).

The active-site Schiff-base intermediate with substrate; via pyruvic acid is the S25. Pyruvic acid (Ser) is present on S25. Position 57 (T57) interacts with substrate. The active-site Proton donor is Y58. Substrate is bound at residue 73–75 (GAA). The disordered stretch occupies residues 118–170 (GHDPAEALPDDPSSLRGDLAVPGNPVTAAARRGTPTHQAPVALPASRTVVAPR).

This sequence belongs to the PanD family. Heterooctamer of four alpha and four beta subunits. Pyruvate is required as a cofactor. Post-translationally, is synthesized initially as an inactive proenzyme, which is activated by self-cleavage at a specific serine bond to produce a beta-subunit with a hydroxyl group at its C-terminus and an alpha-subunit with a pyruvoyl group at its N-terminus.

It localises to the cytoplasm. It catalyses the reaction L-aspartate + H(+) = beta-alanine + CO2. Its pathway is cofactor biosynthesis; (R)-pantothenate biosynthesis; beta-alanine from L-aspartate: step 1/1. Catalyzes the pyruvoyl-dependent decarboxylation of aspartate to produce beta-alanine. The polypeptide is Aspartate 1-decarboxylase (Frankia alni (strain DSM 45986 / CECT 9034 / ACN14a)).